Reading from the N-terminus, the 202-residue chain is Large ribosomal subunit protein eL13 (202 aa).

The segment at 183-202 (GIREKRAKEKAEAEAEKAKK) is disordered.

Belongs to the eukaryotic ribosomal protein eL13 family. In terms of assembly, component of the large ribosomal subunit. Mature ribosomes consist of a small (40S) and a large (60S) subunit. The 40S subunit contains about 32 different proteins and 1 molecule of RNA (18S). The 60S subunit contains 45 different proteins and 3 molecules of RNA (25S, 5.8S and 5S).

It localises to the cytoplasm. Its function is as follows. Component of the ribosome, a large ribonucleoprotein complex responsible for the synthesis of proteins in the cell. The small ribosomal subunit (SSU) binds messenger RNAs (mRNAs) and translates the encoded message by selecting cognate aminoacyl-transfer RNA (tRNA) molecules. The large subunit (LSU) contains the ribosomal catalytic site termed the peptidyl transferase center (PTC), which catalyzes the formation of peptide bonds, thereby polymerizing the amino acids delivered by tRNAs into a polypeptide chain. The nascent polypeptides leave the ribosome through a tunnel in the LSU and interact with protein factors that function in enzymatic processing, targeting, and the membrane insertion of nascent chains at the exit of the ribosomal tunnel. The protein is Large ribosomal subunit protein eL13 of Candida albicans (strain SC5314 / ATCC MYA-2876) (Yeast).